Consider the following 644-residue polypeptide: Exoribonuclease 2 (644 aa).

The RNB domain maps to 189–516 (REDLTALNFV…NHRLLKAIIT (328 aa)). Positions 561 to 643 (DTRFPAEIID…ETRNVVARPV (83 aa)) constitute an S1 motif domain.

The protein belongs to the RNR ribonuclease family. RNase II subfamily.

Its subcellular location is the cytoplasm. The catalysed reaction is Exonucleolytic cleavage in the 3'- to 5'-direction to yield nucleoside 5'-phosphates.. In terms of biological role, involved in mRNA degradation. Hydrolyzes single-stranded polyribonucleotides processively in the 3' to 5' direction. The protein is Exoribonuclease 2 of Yersinia enterocolitica serotype O:8 / biotype 1B (strain NCTC 13174 / 8081).